A 270-amino-acid chain; its full sequence is Putative ABC transporter ATP-binding protein MG304 (270 aa).

An ABC transporter domain is found at 1-232 (MLQVKNLSFK…LDLFHNHHFN (232 aa)). An ATP-binding site is contributed by 36-43 (GHNGSGKS).

The protein belongs to the ABC transporter superfamily.

The sequence is that of Putative ABC transporter ATP-binding protein MG304 from Mycoplasma genitalium (strain ATCC 33530 / DSM 19775 / NCTC 10195 / G37) (Mycoplasmoides genitalium).